Here is a 504-residue protein sequence, read N- to C-terminus: MLRASSKRLQLSWQVFRRFQSSNPQLSFPCVDQAQERSRQFEQSLQKQQACPNSVDPSASITSPSLSSGPEPVYGKIVSGFKKFYHNKPFLCDHGGILPKFEIAYETWGTLNKDHSNAILLHTGLSASSHAHSHPENTAPGWWEQFIGPGKDVDTNKFFVICTNVLGSCYGSTGPSSVDPGDGKHYATRFPIITVNDMIRAQLLLLDHLKIEKLYASVGSSLGGMQSLTLGALAPHRVGRIASISGGARSHPYSIALRFTQRQILMNDPYWNRGFYYDGVPPHTGMKLAREVATISYRSGPEWEQRFGNRRADPSVSPAFCPDFLIETYLDHAGEKFCLQYDPNSLLYISKAMDMHDMSASHQRSLSENRKKNQHKLDKYLSADVSAEEIIKLNEDTSVLPDVPYQEIANEDRAPEPDPETNLIAGLAPLKDTPVMVMGVESDNLMPVECQRETARCLEKAGNKQVVYHELDANESFYGHDTFLIYRKDLDLVGGKLKKFLELS.

Residues 1–26 (MLRASSKRLQLSWQVFRRFQSSNPQL) constitute a mitochondrion transit peptide. The disordered stretch occupies residues 49 to 70 (QACPNSVDPSASITSPSLSSGP). Low complexity predominate over residues 57–70 (PSASITSPSLSSGP). The region spanning 117-395 (NAILLHTGLS…SAEEIIKLNE (279 aa)) is the AB hydrolase-1 domain. Positions 124-127 (GLSA) are important for substrate specificity. Serine 221 (nucleophile) is an active-site residue. Arginine 290 contacts substrate. Residues aspartate 443 and histidine 480 contribute to the active site. Aspartate 481 is a substrate binding site.

The protein belongs to the AB hydrolase superfamily. MetX family.

It localises to the mitochondrion. The catalysed reaction is succinyl-CoA + L-serine = O-succinyl-L-serine + CoA. It participates in amino-acid biosynthesis; L-cysteine biosynthesis; L-cysteine from L-serine: step 1/2. Transfers a succinyl group from succinyl-CoA to L-serine, forming succinyl-L-serine. Also has weak serine acetyl transferase activity and homoserine succinyl transferase activity. The protein is Serine O-succinyltransferase of Schizosaccharomyces pombe (strain 972 / ATCC 24843) (Fission yeast).